A 306-amino-acid polypeptide reads, in one-letter code: [methyl-Co(III) glycine betaine-specific corrinoid protein]--tetrahydrofolate methyltransferase (306 aa).

This sequence belongs to the MtrH family.

The enzyme catalyses methyl-Co(III)-[glycine betaine-specific corrinoid protein] + (6S)-5,6,7,8-tetrahydrofolate = Co(I)-[glycine betaine-specific corrinoid protein] + (6S)-5-methyl-5,6,7,8-tetrahydrofolate + H(+). In terms of biological role, methyltransferase able to catalyze the transfer of a methyl group from methylcobalamin (methylCbl) to tetrahydrofolate (THF) in vitro, to generate methyl-THF and cob(I)alamin. In vivo, the methyl group probably comes from the adjacently encoded methylated corrinoid protein DSY3155. The methyl group may then be ultimately converted to carbon dioxide, and its oxidation would also provide reducing equivalents for anaerobic respiration. Thus, may function in the pathway that allows anaerobic methylotrophic growth of D.hafniense using glycine betaine. This chain is [methyl-Co(III) glycine betaine-specific corrinoid protein]--tetrahydrofolate methyltransferase, found in Desulfitobacterium hafniense (strain Y51).